We begin with the raw amino-acid sequence, 799 residues long: Putative aconitate hydratase, mitochondrial (799 aa).

A mitochondrion-targeting transit peptide spans Met1–Leu32. Substrate is bound by residues Gln108 and Asp201–His203. [4Fe-4S] cluster-binding residues include Cys399, Cys462, and Cys465. Residues Arg489 and Arg494 each coordinate substrate. Positions Lys538–Gly564 are disordered. Position 685-686 (Ala685–Arg686) interacts with substrate.

Belongs to the aconitase/IPM isomerase family.

It is found in the mitochondrion. Its function is as follows. Has no detectable activity towards cis-acontiate or cis-homoaconitate. This is Putative aconitate hydratase, mitochondrial (acoB) from Aspergillus fumigatus (strain ATCC MYA-4609 / CBS 101355 / FGSC A1100 / Af293) (Neosartorya fumigata).